A 636-amino-acid polypeptide reads, in one-letter code: Amylosucrase (636 aa).

D152, H195, Q262, and R292 together coordinate substrate. The Nucleophile role is filled by D294. The active-site Proton donor is E336. 3 residues coordinate substrate: H400, D401, and R517.

It belongs to the glycosyl hydrolase 13 family. In terms of assembly, monomer.

It localises to the secreted. It catalyses the reaction [(1-&gt;4)-alpha-D-glucosyl](n) + sucrose = [(1-&gt;4)-alpha-D-glucosyl](n+1) + D-fructose. With respect to regulation, amylosucrase favors hydrolysis at low sucrose concentrations, and polymerization at high sucrose concentrations. Competitively inhibited by fructose. In terms of biological role, catalyzes the synthesis of alpha-glucan from sucrose. Catalyzes, in addition, sucrose hydrolysis, maltose and maltotriose synthesis by successive transfers of the glucosyl moiety of sucrose onto the released glucose, and finally turanose and trehalulose synthesis, these two sucrose isomers being obtained by glucosyl transfer onto fructose. The sequence is that of Amylosucrase (ams) from Neisseria polysaccharea.